The sequence spans 509 residues: Probable cytochrome P450 4ac3 (509 aa).

Residue C454 participates in heme binding.

Belongs to the cytochrome P450 family. The cofactor is heme.

Its subcellular location is the endoplasmic reticulum membrane. It localises to the microsome membrane. In terms of biological role, may be involved in the metabolism of insect hormones and in the breakdown of synthetic insecticides. The chain is Probable cytochrome P450 4ac3 (Cyp4ac3) from Drosophila melanogaster (Fruit fly).